Consider the following 45-residue polypeptide: Iota-conotoxin-like R11.12 (45 aa).

4 disulfide bridges follow: cysteine 5-cysteine 19, cysteine 12-cysteine 22, cysteine 18-cysteine 27, and cysteine 21-cysteine 36. At leucine 43 the chain carries D-leucine. Position 45 (arginine 45) is a propeptide, removed by a carboxypeptidase.

The protein belongs to the conotoxin I1 superfamily. Expressed by the venom duct.

Its subcellular location is the secreted. Functionally, iota-conotoxins bind to voltage-gated sodium channels (Nav) and act as agonists by shifting the voltage-dependence of activation to more hyperpolarized levels. Produces general excitatory symptoms. The chain is Iota-conotoxin-like R11.12 from Conus radiatus (Rayed cone).